The primary structure comprises 790 residues: Nuclear cap-binding protein subunit 1 (790 aa).

A disordered region spans residues 1 to 26; sequence MSRRRHSYENDGGQPHKRRKTSDANE. Positions 3 to 20 match the Nuclear localization signal motif; it reads RRRHSYENDGGQPHKRRK. The residue at position 7 (Ser7) is a Phosphoserine. Position 21 is a phosphothreonine (Thr21). Phosphoserine is present on residues Ser22 and Ser201. One can recognise an MIF4G domain in the interval 28 to 240; the sequence is EDHLESLICK…CLWAQIQKLK (213 aa). Lys204 is subject to N6-acetyllysine. Residues 643–713 adopt a coiled-coil conformation; the sequence is STIRKMNKHV…SEQKNLFLVI (71 aa). A disordered region spans residues 666–685; sequence LARQHKRRSDDDDRSSDRKD. A Glycyl lysine isopeptide (Lys-Gly) (interchain with G-Cter in SUMO2) cross-link involves residue Lys684. Position 698 is an N6-acetyllysine (Lys698).

This sequence belongs to the NCBP1 family. Component of the nuclear cap-binding complex (CBC), a heterodimer composed of NCBP1/CBP80 and NCBP2/CBP20 that interacts with m7GpppG-capped RNA. Found in a U snRNA export complex containing PHAX/RNUXA, NCBP1/CBP80, NCBP2/CBP20, RAN, XPO1 and m7G-capped RNA. Identified in a IGF2BP1-dependent mRNP granule complex containing untranslated mRNAs. Interacts with PHAX/RNUXA, SRRT/ARS2, EIF4G2, IGF2BP1, HNRNPF, HNRNPH1, KIAA0427/CTIF, PARN, DROSHA, UPF1 and ALYREF/THOC4. May interact with EIF4G1; the interaction is however controversial. The large PER complex involved in the repression of transcriptional termination is composed of at least PER2, CDK9, DDX5, DHX9, NCBP1/CBP80 and POLR2A (active). Component of an alternative nuclear cap-binding complex (CBC) composed of NCBP1/CBP80 and NCBP3. Interacts with METTL3. Interacts with ZFC3H1 in a RNase-insensitive manner. Interacts with MTREX. Interacts with TASOR. Interacts with DHX34; the interaction is RNA-dependent. Interacts with KPNA3. Dephosphorylated at Thr-21 by the PNUTS-PP1 complex during RNA polymerase II transcription pause-release. In terms of tissue distribution, expressed in the spermatogonia, spermatocytes and granular cells within the cerebellum.

Its subcellular location is the nucleus. It localises to the cytoplasm. In terms of biological role, component of the cap-binding complex (CBC), which binds cotranscriptionally to the 5'-cap of pre-mRNAs and is involved in various processes such as pre-mRNA splicing, translation regulation, nonsense-mediated mRNA decay, RNA-mediated gene silencing (RNAi) by microRNAs (miRNAs) and mRNA export. The CBC complex is involved in mRNA export from the nucleus via its interaction with ALYREF/THOC4/ALY, leading to the recruitment of the mRNA export machinery to the 5'-end of mRNA and to mRNA export in a 5' to 3' direction through the nuclear pore. The CBC complex is also involved in mediating U snRNA and intronless mRNAs export from the nucleus. The CBC complex is essential for a pioneer round of mRNA translation, before steady state translation when the CBC complex is replaced by cytoplasmic cap-binding protein eIF4E. The pioneer round of mRNA translation mediated by the CBC complex plays a central role in nonsense-mediated mRNA decay (NMD), NMD only taking place in mRNAs bound to the CBC complex, but not on eIF4E-bound mRNAs. The CBC complex enhances NMD in mRNAs containing at least one exon-junction complex (EJC) via its interaction with UPF1, promoting the interaction between UPF1 and UPF2. The CBC complex is also involved in 'failsafe' NMD, which is independent of the EJC complex, while it does not participate in Staufen-mediated mRNA decay (SMD). During cell proliferation, the CBC complex is also involved in microRNAs (miRNAs) biogenesis via its interaction with SRRT/ARS2 and is required for miRNA-mediated RNA interference. The CBC complex also acts as a negative regulator of PARN, thereby acting as an inhibitor of mRNA deadenylation. In the CBC complex, NCBP1/CBP80 does not bind directly capped RNAs (m7GpppG-capped RNA) but is required to stabilize the movement of the N-terminal loop of NCBP2/CBP20 and lock the CBC into a high affinity cap-binding state with the cap structure. Associates with NCBP3 to form an alternative cap-binding complex (CBC) which plays a key role in mRNA export and is particularly important in cellular stress situations such as virus infections. The conventional CBC with NCBP2 binds both small nuclear RNA (snRNA) and messenger (mRNA) and is involved in their export from the nucleus whereas the alternative CBC with NCBP3 does not bind snRNA and associates only with mRNA thereby playing a role only in mRNA export. NCBP1/CBP80 is required for cell growth and viability. The sequence is that of Nuclear cap-binding protein subunit 1 (Ncbp1) from Mus musculus (Mouse).